Here is a 763-residue protein sequence, read N- to C-terminus: Probable portal protein (763 aa).

The span at 668-679 (GTKHARDLEKMK) shows a compositional bias: basic and acidic residues. Disordered stretches follow at residues 668–706 (GTKH…LPPN) and 729–763 (ERDI…RLGN). Residues 680–689 (AQSQGNQQLE) are compositionally biased toward polar residues.

In terms of assembly, homododecamer.

It localises to the virion. In terms of biological role, forms the portal vertex of the capsid. This portal plays critical roles in head assembly, genome packaging, neck/tail attachment, and genome ejection. The portal protein multimerizes as a single ring-shaped homododecamer arranged around a central channel. The chain is Probable portal protein (59) from Escherichia coli (Bacteriophage N4).